Reading from the N-terminus, the 873-residue chain is Bifunctional heparan sulfate N-deacetylase/N-sulfotransferase 3 (873 aa).

The Cytoplasmic segment spans residues 1–13; sequence MSFIMKPHRHFQR. A helical; Signal-anchor for type II membrane protein transmembrane segment spans residues 14–34; the sequence is TLILLATFCMVSIIISAYYLY. The Lumenal segment spans residues 35–873; that stretch reads SGYKQESEVS…WLRQELQKVR (839 aa). A heparan sulfate N-deacetylase 3 region spans residues 36-589; it reads GYKQESEVSG…KRHRDIWSKE (554 aa). N146, N226, N342, and N392 each carry an N-linked (GlcNAc...) asparagine glycan. Residues 590 to 873 are heparan sulfate N-sulfotransferase 3; it reads KTCDRLPKFL…WLRQELQKVR (284 aa). Residue K605 is the For sulfotransferase activity of the active site. 605–609 is a 3'-phosphoadenylyl sulfate binding site; the sequence is KTGTT. N-linked (GlcNAc...) asparagine glycosylation occurs at N658. Residue S703 coordinates 3'-phosphoadenylyl sulfate. An N-linked (GlcNAc...) asparagine glycan is attached at N794. C809 and C819 are oxidised to a cystine. 824–828 provides a ligand contact to 3'-phosphoadenylyl sulfate; the sequence is KGRKY.

This sequence belongs to the sulfotransferase 1 family. NDST subfamily. As to quaternary structure, monomer. In terms of tissue distribution, strongly expressed strongly in brain. Expressed at high level at embryonic day 11 compared to other stages of development. Weakly expressed in adult heart, kidney, muscle, endothelial cells and testis but not in other tissues.

It is found in the golgi apparatus membrane. It carries out the reaction alpha-D-glucosaminyl-[heparan sulfate](n) + 3'-phosphoadenylyl sulfate = N-sulfo-alpha-D-glucosaminyl-[heparan sulfate](n) + adenosine 3',5'-bisphosphate + 2 H(+). It functions in the pathway glycan metabolism; heparan sulfate biosynthesis. It participates in glycan metabolism; heparin biosynthesis. Essential bifunctional enzyme that catalyzes both the N-deacetylation and the N-sulfation of glucosamine (GlcNAc) of the glycosaminoglycan in heparan sulfate. Modifies the GlcNAc-GlcA disaccharide repeating sugar backbone to make N-sulfated heparosan, a prerequisite substrate for later modifications in heparin biosynthesis. Has high deacetylase activity but low sulfotransferase activity. The polypeptide is Bifunctional heparan sulfate N-deacetylase/N-sulfotransferase 3 (Ndst3) (Mus musculus (Mouse)).